A 405-amino-acid chain; its full sequence is Magnesium-protoporphyrin IX monomethyl ester [oxidative] cyclase, chloroplastic (405 aa).

A chloroplast-targeting transit peptide spans 1-44 (MAAEMALVKPITPKFINPMRTFSSSSKFSTIKMSATSQSNTTTT). Residues 33–47 (MSATSQSNTTTTATK) are compositionally biased toward low complexity. The interval 33–54 (MSATSQSNTTTTATKPSKKGNK) is disordered.

Belongs to the AcsF family. Requires Fe cation as cofactor.

It localises to the plastid. The protein localises to the chloroplast. It carries out the reaction Mg-protoporphyrin IX 13-monomethyl ester + 3 NADPH + 3 O2 + 2 H(+) = 3,8-divinyl protochlorophyllide a + 3 NADP(+) + 5 H2O. It participates in porphyrin-containing compound metabolism; chlorophyll biosynthesis. Functionally, catalyzes the formation of the isocyclic ring in chlorophyll biosynthesis. Mediates the cyclase reaction, which results in the formation of divinylprotochlorophyllide (Pchlide) characteristic of all chlorophylls from magnesium-protoporphyrin IX 13-monomethyl ester (MgPMME). In Euphorbia esula (Leafy spurge), this protein is Magnesium-protoporphyrin IX monomethyl ester [oxidative] cyclase, chloroplastic (CRD1).